The chain runs to 405 residues: tRNA-specific 2-thiouridylase MnmA (405 aa).

Residues Ala41–Ser48 and Leu67 contribute to the ATP site. Catalysis depends on Cys135, which acts as the Nucleophile. Cys135 and Cys231 are joined by a disulfide. Gly159 contributes to the ATP binding site. The interaction with tRNA stretch occupies residues Lys181–Gln183. Cys231 serves as the catalytic Cysteine persulfide intermediate.

This sequence belongs to the MnmA/TRMU family.

The protein localises to the cytoplasm. It catalyses the reaction S-sulfanyl-L-cysteinyl-[protein] + uridine(34) in tRNA + AH2 + ATP = 2-thiouridine(34) in tRNA + L-cysteinyl-[protein] + A + AMP + diphosphate + H(+). Its function is as follows. Catalyzes the 2-thiolation of uridine at the wobble position (U34) of tRNA, leading to the formation of s(2)U34. This is tRNA-specific 2-thiouridylase MnmA from Maricaulis maris (strain MCS10) (Caulobacter maris).